The chain runs to 292 residues: Elongation factor Ts (292 aa).

The interval 79–82 (TDFV) is involved in Mg(2+) ion dislocation from EF-Tu.

It belongs to the EF-Ts family.

It localises to the cytoplasm. Its function is as follows. Associates with the EF-Tu.GDP complex and induces the exchange of GDP to GTP. It remains bound to the aminoacyl-tRNA.EF-Tu.GTP complex up to the GTP hydrolysis stage on the ribosome. The sequence is that of Elongation factor Ts from Xanthomonas campestris pv. campestris (strain B100).